The sequence spans 200 residues: Ras-related protein Rab-10 (200 aa).

GTP contacts are provided by Ser-18, Gly-19, Val-20, Gly-21, Lys-22, Thr-23, Cys-24, Asn-35, Thr-36, Ser-40, and Thr-41. Thr-23 lines the Mg(2+) pocket. 2 short sequence motifs (switch) span residues 32-46 (DAFNTTFISTIEIDF) and 64-81 (DTAGQERFHTITTSYYRG). Mg(2+) contacts are provided by Thr-41 and Asp-64. Gly-67 serves as a coordination point for GTP. Phosphothreonine is present on Thr-73. The residue at position 102 (Lys-102) is an N6-acetyllysine. A Glycyl lysine isopeptide (Lys-Gly) (interchain with G-Cter in ubiquitin) cross-link involves residue Lys-102. 4 residues coordinate GTP: Asn-122, Lys-123, Asp-125, and Met-126. A Glycyl lysine isopeptide (Lys-Gly) (interchain with G-Cter in ubiquitin) cross-link involves residue Lys-136. 3 residues coordinate GTP: Ser-152, Ala-153, and Lys-154. Residue Lys-154 forms a Glycyl lysine isopeptide (Lys-Gly) (interchain with G-Cter in ubiquitin) linkage. S-geranylgeranyl cysteine attachment occurs at residues Cys-199 and Cys-200.

The protein belongs to the small GTPase superfamily. Rab family. In terms of assembly, interacts with MYO5A; mediates the transport to the plasma membrane of SLC2A4/GLUT4 storage vesicles. Interacts with GDI1 and with GDI2; negatively regulates RAB10 association with membranes and activation. Interacts (GDP-bound form) with LLGL1; the interaction is direct and promotes RAB10 association with membranes and activation through competition with the Rab inhibitor GDI1. Interacts with EXOC4; probably associates with the exocyst. Interacts (GTP-bound form) with MICALCL, MICAL1, MICAL3, EHBP1 and EHBP1L1; at least in case of MICAL1 two molecules of RAB10 can bind to one molecule of MICAL1. Interacts with TBC1D13. Interacts with SEC16A. Interacts with CHM. Interacts with LRRK2; interaction facilitates phosphorylation of Thr-73. Interacts with RILPL1 and RILPL2 when phosphorylated on Thr-73. Interacts with TBC1D21. Interacts with MARCKS. The cofactor is Mg(2+). Phosphorylation of Thr-73 in the switch II region by LRRK2 prevents the association of RAB regulatory proteins, including CHM and RAB GDP dissociation inhibitors GDI1 and GDI2. Phosphorylation of Thr-73 by LRRK2 is stimulated by RAB29 and RAB32. Phosphorylation by LRRK2 is required for localization to stressed lysosomes. In terms of tissue distribution, highest levels in neural and muscle tissues.

It localises to the cytoplasmic vesicle membrane. It is found in the golgi apparatus. Its subcellular location is the trans-Golgi network membrane. The protein resides in the endosome membrane. The protein localises to the recycling endosome membrane. It localises to the cytoplasmic vesicle. It is found in the phagosome membrane. Its subcellular location is the cell projection. The protein resides in the cilium. The protein localises to the endoplasmic reticulum membrane. It localises to the cytoplasm. It is found in the perinuclear region. Its subcellular location is the lysosome. It carries out the reaction GTP + H2O = GDP + phosphate + H(+). Regulated by guanine nucleotide exchange factors (GEFs) DENND4C and RABIF which promote the exchange of bound GDP for free GTP. Regulated by GTPase activating proteins (GAPs) including TBC1D21 which increase the GTP hydrolysis activity. Inhibited by GDP dissociation inhibitors GDI1 and GDI2 which prevent Rab-GDP dissociation. The small GTPases Rab are key regulators of intracellular membrane trafficking, from the formation of transport vesicles to their fusion with membranes. Rabs cycle between an inactive GDP-bound form and an active GTP-bound form that is able to recruit to membranes different set of downstream effectors directly responsible for vesicle formation, movement, tethering and fusion. That Rab is mainly involved in the biosynthetic transport of proteins from the Golgi to the plasma membrane. Regulates, for instance, SLC2A4/GLUT4 glucose transporter-enriched vesicles delivery to the plasma membrane. In parallel, it regulates the transport of TLR4, a toll-like receptor to the plasma membrane and therefore may be important for innate immune response. Also plays a specific role in asymmetric protein transport to the plasma membrane. In neurons, it is involved in axonogenesis through regulation of vesicular membrane trafficking toward the axonal plasma membrane. In epithelial cells, it regulates transport from the Golgi to the basolateral membrane. May play a role in the basolateral recycling pathway and in phagosome maturation. May play a role in endoplasmic reticulum dynamics and morphology controlling tubulation along microtubules and tubules fusion. Together with LRRK2, RAB8A, and RILPL1, it regulates ciliogenesis. When phosphorylated by LRRK2 on Thr-73, it binds RILPL1 and inhibits ciliogenesis. Participates in the export of a subset of neosynthesized proteins through a Rab8-Rab10-Rab11-dependent endososomal export route. Targeted to and stabilized on stressed lysosomes through LRRK2 phosphorylation where it promotes the extracellular release of lysosomal content through EHBP1 and EHNP1L1 effector proteins. This chain is Ras-related protein Rab-10, found in Rattus norvegicus (Rat).